The sequence spans 330 residues: MKDKAYDITIIGGGPIGLFAAFYAGLRGVTVKIIESLSELGGQPAILYPEKMIYDIPAYPSLTGAELTENLIKQLSRFEDRTTICLKEEVLTFDKVKGGFSIRTNKAEHFSKAIIIACGNGAFAPRTLGLESEENFADHNLFYNVHQLDQFAGQKVVICGGGDSAVDWALALEDIAESVTVVHRRDAFRAHEHSVELLKASTVNLLTPYVPKALKGIGNLAEKLVIQKVKEDEVLELELDSLIVSFGFSTSNKNLKNWNLDYKRSSITVSPLFQTSQEGIFAIGDAAAYNGKVDLIATGFGEAPTAVNQAINYIYPDRDNRVVHSTSLID.

Glu-35, Gln-43, Tyr-48, Val-90, Phe-123, Asp-285, and Thr-326 together coordinate FAD.

The protein belongs to the ferredoxin--NADP reductase type 2 family. As to quaternary structure, homodimer. FAD is required as a cofactor.

It carries out the reaction 2 reduced [2Fe-2S]-[ferredoxin] + NADP(+) + H(+) = 2 oxidized [2Fe-2S]-[ferredoxin] + NADPH. The polypeptide is Ferredoxin--NADP reductase (Streptococcus pyogenes serotype M3 (strain ATCC BAA-595 / MGAS315)).